The primary structure comprises 151 residues: FIS1-related protein fis-2 (151 aa).

The chain crosses the membrane as a helical span at residues 126 to 146 (LIGAAIVGGGALALAGLVAIF).

It belongs to the FIS1 family.

The protein resides in the mitochondrion outer membrane. Its subcellular location is the peroxisome membrane. The protein localises to the mitochondrion. Involved in the fragmentation of the mitochondrial network. Involved in perinuclear clustering of the mitochondrial network. May act, redundantly with fis-1, downstream of mitochondrial fission, before the fission products participate in mitochondrial homeostasis, mitophagy, or apoptosis. Plays a role in apoptosis by promoting mitochondrial elimination and cell-death execution, acting downstream of caspase ced-3, and perhaps independently of dynamin GTPase drp-1, caspase ced-9 and apoptosis-inducing factor AIFM/wah-1. The polypeptide is FIS1-related protein fis-2 (Caenorhabditis elegans).